A 411-amino-acid polypeptide reads, in one-letter code: Protein DDI1 homolog 2 (411 aa).

The Ubiquitin-like domain maps to 1-81 (MLLTVFCAPR…LVLRQAERLR (81 aa)). The interval 82 to 144 (APPQPTVPGL…SGVSPQGLDN (63 aa)) is disordered. A compositionally biased stretch (low complexity) spans 108–121 (QNRNRPQQAQRPST). Asp262 is an active-site residue. The short motif at 387–406 (DEIADRELAEAIQRSVQDSG) is the Ubiquitin-binding element.

The protein belongs to the DDI1 family. In terms of assembly, homodimer.

It is found in the cytoplasm. Its subcellular location is the cytosol. It localises to the chromosome. In terms of biological role, aspartic protease that mediates the cleavage of NFE2L1/NRF1 at 'Leu-104', thereby promoting release of NFE2L1/NRF1 from the endoplasmic reticulum membrane. Ubiquitination of NFE2L1/NRF1 is a prerequisite for cleavage, suggesting that DDI2 specifically recognizes and binds ubiquitinated NFE2L1/NRF1. Seems to act as a proteasomal shuttle which links the proteasome and replication fork proteins like RTF2. Required for cellular survival following replication stress. This Danio rerio (Zebrafish) protein is Protein DDI1 homolog 2 (ddi2).